The following is a 370-amino-acid chain: Protein commissureless 1 (370 aa).

The Extracellular segment spans residues 1-136 (MISTTDYPTV…DADMHVIINY (136 aa)). The tract at residues 108–131 (LRDRSEESGESSWWSQIFGDADMH) is required for vesicular localization. The helical transmembrane segment at 137-157 (LWIGVVSSLVILSLVFILFSC) threads the bilayer. At 158–370 (YFYRKFRTWK…CASLVVVVAA (213 aa)) the chain is on the cytoplasmic side. 2 short sequence motifs (PY-motif) span residues 220–223 (PPCY) and 229–232 (LPSY). Positions 227 to 237 (TGLPSYDEALH) are interaction with Nedd4. A disordered region spans residues 287-312 (VEEDKADSSSSTSASASPSSSESSNL). Positions 294 to 312 (SSSSTSASASPSSSESSNL) are enriched in low complexity.

Belongs to the commissureless family. Interacts (probably via PY-motifs) with Nedd4 (via WW2 domain). Interacts with Robo. Ubiquitinated by Nedd4; which promotes endocytosis of the comm/robo complex and comm proteasomal degradation. Not ubiquitinated by Nedd4.

It localises to the cytoplasmic vesicle membrane. Its subcellular location is the cell membrane. Its function is as follows. Controls axon guidance across the CNS midline by preventing the delivery of Robo to the growth cone. The sequence is that of Protein commissureless 1 from Drosophila melanogaster (Fruit fly).